Reading from the N-terminus, the 154-residue chain is Large ribosomal subunit protein uL30 (154 aa).

Residues 114-139 (PVLRLHPPRGGHRGQKHPTAEGGQIG) are disordered. The span at 119-129 (HPPRGGHRGQK) shows a compositional bias: basic residues.

This sequence belongs to the universal ribosomal protein uL30 family. Part of the 50S ribosomal subunit.

The protein is Large ribosomal subunit protein uL30 of Haloquadratum walsbyi (strain DSM 16790 / HBSQ001).